A 707-amino-acid chain; its full sequence is Protein kinase C-like 1B (707 aa).

Positions 1 to 114 (MLFTGTVRVR…KIGSANDIWV (114 aa)) constitute a C2 domain. Phorbol-ester/DAG-type zinc fingers lie at residues 170-220 (GHKF…VWKC) and 248-298 (PHRF…ANNC). Residues 323-368 (SKKKPSIMTDTSTDISGSSNSENSGYLQQISEDDSGTTSSRSASKV) form a disordered region. Polar residues predominate over residues 330–365 (MTDTSTDISGSSNSENSGYLQQISEDDSGTTSSRSA). In terms of domain architecture, Protein kinase spans 378-638 (FTFMKVLGKG…EDAIRAHPFF (261 aa)). ATP contacts are provided by residues 384–392 (LGKGSFGKV) and Lys407. The active-site Proton acceptor is the Asp502. The region spanning 639–707 (REIDWDALES…FSFINPHFTY (69 aa)) is the AGC-kinase C-terminal domain.

Belongs to the protein kinase superfamily. AGC Ser/Thr protein kinase family. PKC subfamily. In terms of tissue distribution, expressed selectively in neurons that receive, transmit and process environmental signals.

It is found in the membrane. It localises to the cytoplasm. Its subcellular location is the cytoskeleton. It catalyses the reaction L-seryl-[protein] + ATP = O-phospho-L-seryl-[protein] + ADP + H(+). It carries out the reaction L-threonyl-[protein] + ATP = O-phospho-L-threonyl-[protein] + ADP + H(+). Functionally, PKC is activated by diacylglycerol which in turn phosphorylates a range of cellular proteins. PKC also serves as the receptor for phorbol esters, a class of tumor promoters. Involved in neuropeptide secretion in motor axons. Likely to act via the extracellular signal-regulated kinase/mitogen-activated protein kinase (ERK/MAPK) pathway in the signaling response to various sensory neurons; temperature, odor, taste, and osmolality. Its role in regulation differs depending on the neuron in which it is acting; thermosensation in AFD neurons, osmolality in ASH neurons, olfactory perception in AWA and AWC neurons. Promotes dauer formation mediated by the insulin/IGF pathway. Required for resistance to antimitotic toxins. The polypeptide is Protein kinase C-like 1B (Caenorhabditis elegans).